The chain runs to 837 residues: PE-PGRS family protein PE_PGRS4 (837 aa).

In terms of domain architecture, PE spans 4-94 (VIAAPEVIAA…GAYAAAEAAA (91 aa)). Gly residues predominate over residues 811 to 825 (NGGKAGGTPGAGGTS). The tract at residues 811-837 (NGGKAGGTPGAGGTSGLIIGENGLNGL) is disordered. Over residues 826-837 (GLIIGENGLNGL) the composition is skewed to low complexity.

Belongs to the mycobacterial PE family. PGRS subfamily.

The polypeptide is PE-PGRS family protein PE_PGRS4 (Mycobacterium tuberculosis (strain ATCC 25618 / H37Rv)).